The sequence spans 287 residues: Bifunctional protein FolD (287 aa).

NADP(+)-binding positions include 166–168 (GAS), serine 191, and isoleucine 232.

This sequence belongs to the tetrahydrofolate dehydrogenase/cyclohydrolase family. In terms of assembly, homodimer.

The enzyme catalyses (6R)-5,10-methylene-5,6,7,8-tetrahydrofolate + NADP(+) = (6R)-5,10-methenyltetrahydrofolate + NADPH. It catalyses the reaction (6R)-5,10-methenyltetrahydrofolate + H2O = (6R)-10-formyltetrahydrofolate + H(+). Its pathway is one-carbon metabolism; tetrahydrofolate interconversion. Functionally, catalyzes the oxidation of 5,10-methylenetetrahydrofolate to 5,10-methenyltetrahydrofolate and then the hydrolysis of 5,10-methenyltetrahydrofolate to 10-formyltetrahydrofolate. The sequence is that of Bifunctional protein FolD from Haemophilus ducreyi (strain 35000HP / ATCC 700724).